Here is a 715-residue protein sequence, read N- to C-terminus: Fatty acid oxidation complex subunit alpha (715 aa).

Residues 1–190 (MTTTSAFMLS…KAGLVDDVVP (190 aa)) form an enoyl-CoA hydratase region. Residues 306–714 (GPLNSVGILG…FWTNGETDQG (409 aa)) are 3-hydroxyacyl-CoA dehydrogenase.

This sequence in the N-terminal section; belongs to the enoyl-CoA hydratase/isomerase family. In the central section; belongs to the 3-hydroxyacyl-CoA dehydrogenase family. Heterotetramer of two alpha chains (FadJ) and two beta chains (FadI).

The protein resides in the cytoplasm. It carries out the reaction a (3S)-3-hydroxyacyl-CoA = a (2E)-enoyl-CoA + H2O. The catalysed reaction is a 4-saturated-(3S)-3-hydroxyacyl-CoA = a (3E)-enoyl-CoA + H2O. The enzyme catalyses a (3S)-3-hydroxyacyl-CoA + NAD(+) = a 3-oxoacyl-CoA + NADH + H(+). It catalyses the reaction (3S)-3-hydroxybutanoyl-CoA = (3R)-3-hydroxybutanoyl-CoA. Its pathway is lipid metabolism; fatty acid beta-oxidation. Functionally, catalyzes the formation of a hydroxyacyl-CoA by addition of water on enoyl-CoA. Also exhibits 3-hydroxyacyl-CoA epimerase and 3-hydroxyacyl-CoA dehydrogenase activities. The protein is Fatty acid oxidation complex subunit alpha of Salmonella typhi.